Consider the following 100-residue polypeptide: Ubiquitin-related modifier 1 homolog (100 aa).

A 1-thioglycine modification is found at Gly100. Residue Gly100 forms a Glycyl lysine isopeptide (Gly-Lys) (interchain with K-? in acceptor proteins) linkage.

It belongs to the URM1 family. C-terminal thiocarboxylation occurs in 2 steps, it is first acyl-adenylated (-COAMP) via the hesA/moeB/thiF part of the MOCS3 homolog, then thiocarboxylated (-COSH) via the rhodanese domain of the MOCS3 homolog.

The protein resides in the cytoplasm. Its pathway is tRNA modification; 5-methoxycarbonylmethyl-2-thiouridine-tRNA biosynthesis. Its function is as follows. Acts as a sulfur carrier required for 2-thiolation of mcm(5)S(2)U at tRNA wobble positions of cytosolic tRNA(Lys), tRNA(Glu) and tRNA(Gln). Serves as sulfur donor in tRNA 2-thiolation reaction by being thiocarboxylated (-COSH) at its C-terminus by MOCS3. The sulfur is then transferred to tRNA to form 2-thiolation of mcm(5)S(2)U. Also acts as a ubiquitin-like protein (UBL) that is covalently conjugated via an isopeptide bond to lysine residues of target proteins. The thiocarboxylated form serves as substrate for conjugation and oxidative stress specifically induces the formation of UBL-protein conjugates. This chain is Ubiquitin-related modifier 1 homolog, found in Oryza sativa subsp. japonica (Rice).